Consider the following 346-residue polypeptide: Glycerol-3-phosphate dehydrogenase [NAD(P)+] (346 aa).

Positions 15, 16, 36, and 110 each coordinate NADPH. Residues Lys110, Gly139, and Ser141 each coordinate sn-glycerol 3-phosphate. Ala143 contributes to the NADPH binding site. Residues Lys194, Asp247, Ser257, Arg258, and Asn259 each coordinate sn-glycerol 3-phosphate. The active-site Proton acceptor is Lys194. Residue Arg258 coordinates NADPH. NADPH is bound by residues Val282 and Glu284.

This sequence belongs to the NAD-dependent glycerol-3-phosphate dehydrogenase family.

It is found in the cytoplasm. The enzyme catalyses sn-glycerol 3-phosphate + NAD(+) = dihydroxyacetone phosphate + NADH + H(+). It catalyses the reaction sn-glycerol 3-phosphate + NADP(+) = dihydroxyacetone phosphate + NADPH + H(+). It participates in membrane lipid metabolism; glycerophospholipid metabolism. Catalyzes the reduction of the glycolytic intermediate dihydroxyacetone phosphate (DHAP) to sn-glycerol 3-phosphate (G3P), the key precursor for phospholipid synthesis. The polypeptide is Glycerol-3-phosphate dehydrogenase [NAD(P)+] (Xylella fastidiosa (strain Temecula1 / ATCC 700964)).